Consider the following 333-residue polypeptide: Nucleoid-associated protein VC0395_A1624/VC395_2154 (333 aa).

This sequence belongs to the YejK family.

It is found in the cytoplasm. The protein resides in the nucleoid. The sequence is that of Nucleoid-associated protein VC0395_A1624/VC395_2154 from Vibrio cholerae serotype O1 (strain ATCC 39541 / Classical Ogawa 395 / O395).